A 218-amino-acid chain; its full sequence is Large ribosomal subunit protein uL4 (218 aa).

The tract at residues 55 to 83 (THATKTRGMVSGGGKKPWKQKGTGRARQG) is disordered.

The protein belongs to the universal ribosomal protein uL4 family. As to quaternary structure, part of the 50S ribosomal subunit.

In terms of biological role, one of the primary rRNA binding proteins, this protein initially binds near the 5'-end of the 23S rRNA. It is important during the early stages of 50S assembly. It makes multiple contacts with different domains of the 23S rRNA in the assembled 50S subunit and ribosome. Forms part of the polypeptide exit tunnel. The polypeptide is Large ribosomal subunit protein uL4 (Bifidobacterium longum (strain DJO10A)).